The sequence spans 99 residues: MAEGDTLVSVDYEIFGKVQGVFFRKYTQAEGKKLGLVGWVQNTDRGTVQGQLQGPVSKVRFMQQWLETRGSPKSHIDRANFNNEKVIANLDYSDFQIVK.

Ala2 is subject to N-acetylalanine. In terms of domain architecture, Acylphosphatase-like spans 9 to 99 (SVDYEIFGKV…LDYSDFQIVK (91 aa)). Residues Arg24 and Asn42 contribute to the active site.

This sequence belongs to the acylphosphatase family.

The catalysed reaction is an acyl phosphate + H2O = a carboxylate + phosphate + H(+). The sequence is that of Acylphosphatase-1 (Acyp1) from Mus musculus (Mouse).